We begin with the raw amino-acid sequence, 327 residues long: DNA-directed RNA polymerase subunit alpha (327 aa).

Residues 1–233 (MVREKVKVST…NLFIPFLHVE (233 aa)) form an alpha N-terminal domain (alpha-NTD) region. The tract at residues 267–327 (LAFQYIFIDQ…KKILDILEKK (61 aa)) is alpha C-terminal domain (alpha-CTD).

It belongs to the RNA polymerase alpha chain family. In plastids the minimal PEP RNA polymerase catalytic core is composed of four subunits: alpha, beta, beta', and beta''. When a (nuclear-encoded) sigma factor is associated with the core the holoenzyme is formed, which can initiate transcription.

The protein resides in the plastid. It is found in the chloroplast. The catalysed reaction is RNA(n) + a ribonucleoside 5'-triphosphate = RNA(n+1) + diphosphate. DNA-dependent RNA polymerase catalyzes the transcription of DNA into RNA using the four ribonucleoside triphosphates as substrates. In Lobularia maritima (Sweet alyssum), this protein is DNA-directed RNA polymerase subunit alpha.